The following is a 467-amino-acid chain: Uronate isomerase (467 aa).

It belongs to the metallo-dependent hydrolases superfamily. Uronate isomerase family.

The enzyme catalyses D-glucuronate = D-fructuronate. It catalyses the reaction aldehydo-D-galacturonate = keto-D-tagaturonate. Its pathway is carbohydrate metabolism; pentose and glucuronate interconversion. The protein is Uronate isomerase of Mannheimia succiniciproducens (strain KCTC 0769BP / MBEL55E).